Here is a 495-residue protein sequence, read N- to C-terminus: Probable leucine aminopeptidase 2 (495 aa).

An N-terminal signal peptide occupies residues 1 to 21 (MKSQLLSLAVAVTTISQGVVG). Positions 130 to 216 (MAELVVAKNN…SQEDGKNLAT (87 aa)) constitute a PA domain. 2 N-linked (GlcNAc...) asparagine glycosylation sites follow: N142 and N235. H259 and D271 together coordinate Zn(2+). An N-linked (GlcNAc...) asparagine glycan is attached at N272. The active-site Proton acceptor is E303. Residues E304 and D332 each coordinate Zn(2+). Residue N352 is glycosylated (N-linked (GlcNAc...) asparagine). H430 lines the Zn(2+) pocket.

This sequence belongs to the peptidase M28 family. M28A subfamily. Monomer. It depends on Zn(2+) as a cofactor.

The protein resides in the secreted. Functionally, extracellular aminopeptidase that releases a wide variety of amino acids from natural peptides and contributes to pathogenicity. The sequence is that of Probable leucine aminopeptidase 2 (LAP2) from Arthroderma benhamiae (strain ATCC MYA-4681 / CBS 112371) (Trichophyton mentagrophytes).